Reading from the N-terminus, the 360-residue chain is MQFFENDSYLRSALRKSVKRTPIWIMRQSGRYLKEYQSIKKQAKDFLSLCKTPDLSSKAALIPIKKFSLDAAIIFSDILILPYAMGMDVNFYENLGPSFLNPISSISDMKNLNVPDPEKNLKYVLDSIKIICKELDKKIPLIGFSGSPWTLACYMIEGKCNKIFSKIKKMIYQNSKELHFLLKKITNSIILYLNSQIIYGVNAIIIFDTWGGILTEEKYCEYSLHYMSLIIKNLFCKYKGNKIPVTIFTKNGGQWIKKIAKSGCDVIALDWSVDIEYARKQVNGKIAIQGNMDPFELYGSFSSIEEETNKILSKFGYNSGHIFSLGHGIYKDTPPENVNFLIESVHNLSKKYHKKNRFKK.

Substrate-binding positions include 27 to 31 (RQSGR), F46, D77, Y154, T209, and H327.

This sequence belongs to the uroporphyrinogen decarboxylase family. In terms of assembly, homodimer.

The protein resides in the cytoplasm. It catalyses the reaction uroporphyrinogen III + 4 H(+) = coproporphyrinogen III + 4 CO2. It functions in the pathway porphyrin-containing compound metabolism; protoporphyrin-IX biosynthesis; coproporphyrinogen-III from 5-aminolevulinate: step 4/4. Functionally, catalyzes the decarboxylation of four acetate groups of uroporphyrinogen-III to yield coproporphyrinogen-III. This chain is Uroporphyrinogen decarboxylase, found in Wigglesworthia glossinidia brevipalpis.